Here is a 231-residue protein sequence, read N- to C-terminus: Cytochrome c oxidase subunit 2 (231 aa).

The Mitochondrial intermembrane portion of the chain corresponds to 1–14 (MAHPSQLGLQDAAS). The chain crosses the membrane as a helical span at residues 15–45 (PVMEELLHFHDHALMIVFLISTLVFYIILAM). Topologically, residues 46 to 59 (MTTKMTDKYILDAQ) are mitochondrial matrix. Residues 60–87 (EIEIVWTLLPAIVLILVALPSLRILYLI) form a helical membrane-spanning segment. Topologically, residues 88-231 (DEVENPHLTI…WSSSMLEEAX (144 aa)) are mitochondrial intermembrane. Positions 161, 196, 198, 200, 204, and 207 each coordinate Cu cation. A Mg(2+)-binding site is contributed by E198.

It belongs to the cytochrome c oxidase subunit 2 family. In terms of assembly, component of the cytochrome c oxidase (complex IV, CIV), a multisubunit enzyme composed of 14 subunits. The complex is composed of a catalytic core of 3 subunits MT-CO1, MT-CO2 and MT-CO3, encoded in the mitochondrial DNA, and 11 supernumerary subunits COX4I, COX5A, COX5B, COX6A, COX6B, COX6C, COX7A, COX7B, COX7C, COX8 and NDUFA4, which are encoded in the nuclear genome. The complex exists as a monomer or a dimer and forms supercomplexes (SCs) in the inner mitochondrial membrane with NADH-ubiquinone oxidoreductase (complex I, CI) and ubiquinol-cytochrome c oxidoreductase (cytochrome b-c1 complex, complex III, CIII), resulting in different assemblies (supercomplex SCI(1)III(2)IV(1) and megacomplex MCI(2)III(2)IV(2)). Found in a complex with TMEM177, COA6, COX18, COX20, SCO1 and SCO2. Interacts with TMEM177 in a COX20-dependent manner. Interacts with COX20. Interacts with COX16. Cu cation serves as cofactor.

It is found in the mitochondrion inner membrane. The catalysed reaction is 4 Fe(II)-[cytochrome c] + O2 + 8 H(+)(in) = 4 Fe(III)-[cytochrome c] + 2 H2O + 4 H(+)(out). Functionally, component of the cytochrome c oxidase, the last enzyme in the mitochondrial electron transport chain which drives oxidative phosphorylation. The respiratory chain contains 3 multisubunit complexes succinate dehydrogenase (complex II, CII), ubiquinol-cytochrome c oxidoreductase (cytochrome b-c1 complex, complex III, CIII) and cytochrome c oxidase (complex IV, CIV), that cooperate to transfer electrons derived from NADH and succinate to molecular oxygen, creating an electrochemical gradient over the inner membrane that drives transmembrane transport and the ATP synthase. Cytochrome c oxidase is the component of the respiratory chain that catalyzes the reduction of oxygen to water. Electrons originating from reduced cytochrome c in the intermembrane space (IMS) are transferred via the dinuclear copper A center (CU(A)) of subunit 2 and heme A of subunit 1 to the active site in subunit 1, a binuclear center (BNC) formed by heme A3 and copper B (CU(B)). The BNC reduces molecular oxygen to 2 water molecules using 4 electrons from cytochrome c in the IMS and 4 protons from the mitochondrial matrix. The polypeptide is Cytochrome c oxidase subunit 2 (MT-CO2) (Latimeria chalumnae (Coelacanth)).